Reading from the N-terminus, the 219-residue chain is UPF0319 protein MS0844 (219 aa).

An N-terminal signal peptide occupies residues 1 to 21 (MKFRLTALAVAALLTSTASFA).

The protein belongs to the UPF0319 family.

This is UPF0319 protein MS0844 from Mannheimia succiniciproducens (strain KCTC 0769BP / MBEL55E).